The sequence spans 350 residues: Ornithine carbamoyltransferase, mitochondrial (350 aa).

The transit peptide at 1–30 (MLHHMRTIINASWRYGNKCIVRQFGFSQTY) directs the protein to the mitochondrion. Carbamoyl phosphate is bound by residues 86-90 (STRTR), Arg-137, and His-164. Arg-137 contributes to the L-ornithine binding site. Residues Asn-195, 259-263 (DTWVS), 298-301 (HCLP), and Arg-326 each bind L-ornithine. Cys-299 is a catalytic residue. Arg-326 is a binding site for carbamoyl phosphate.

It belongs to the aspartate/ornithine carbamoyltransferase superfamily. OTCase family. In terms of assembly, homotrimer. Liver.

The protein resides in the mitochondrion matrix. It catalyses the reaction carbamoyl phosphate + L-ornithine = L-citrulline + phosphate + H(+). It functions in the pathway nitrogen metabolism; urea cycle; L-citrulline from L-ornithine and carbamoyl phosphate: step 1/1. OTC is necessary for the tadpoles transition from an ammonotelic, aquatic larva to a ureotelic, terrestrial adult. The protein is Ornithine carbamoyltransferase, mitochondrial of Aquarana catesbeiana (American bullfrog).